The chain runs to 42 residues: Crotamine-IV-2 (42 aa).

Cystine bridges form between cysteine 4–cysteine 37, cysteine 11–cysteine 31, and cysteine 19–cysteine 38.

It belongs to the crotamine-myotoxin family. In terms of assembly, monomer. As to expression, expressed by the venom gland.

The protein localises to the secreted. Cationic peptide that possesses multiple functions. It acts as a cell-penetrating peptide (CPP), and as a potent voltage-gated potassium channel (Kv) inhibitor. It exhibits antimicrobial activities, and hind limb paralysis. It also induces potent blockade of neuromuscular transmission in young chicken biventer cervicis preparation and potent myotoxic effect. In vivo, induces myonecrosis, upon intramuscular or subcutaneous injections into mice. In Crotalus durissus cumanensis (South American rattlesnake), this protein is Crotamine-IV-2.